The following is a 712-amino-acid chain: Polyribonucleotide nucleotidyltransferase (712 aa).

Residues D487 and D493 each contribute to the Mg(2+) site. One can recognise a KH domain in the interval 554–613 (PKILTMQINPEKIREVIGPSGKQINKIIDETGVKIDIEQDGTIFISSVNEAMNQKAKQII). Positions 623–691 (GQIYLGKVKR…KQGRVNLSRK (69 aa)) constitute an S1 motif domain.

The protein belongs to the polyribonucleotide nucleotidyltransferase family. Requires Mg(2+) as cofactor.

It localises to the cytoplasm. It catalyses the reaction RNA(n+1) + phosphate = RNA(n) + a ribonucleoside 5'-diphosphate. Functionally, involved in mRNA degradation. Catalyzes the phosphorolysis of single-stranded polyribonucleotides processively in the 3'- to 5'-direction. In Geobacillus sp. (strain WCH70), this protein is Polyribonucleotide nucleotidyltransferase.